The chain runs to 88 residues: HssA/B-like protein 17 (88 aa).

It belongs to the hssA/B family.

This chain is HssA/B-like protein 17 (hssl17), found in Dictyostelium discoideum (Social amoeba).